Here is an 879-residue protein sequence, read N- to C-terminus: DNA mismatch repair protein MutS (879 aa).

Residue 629–636 (GPNMGGKS) participates in ATP binding.

Belongs to the DNA mismatch repair MutS family.

Its function is as follows. This protein is involved in the repair of mismatches in DNA. It is possible that it carries out the mismatch recognition step. This protein has a weak ATPase activity. The chain is DNA mismatch repair protein MutS from Erythrobacter litoralis (strain HTCC2594).